Consider the following 842-residue polypeptide: CRM-domain containing factor CFM3, chloroplastic/mitochondrial (842 aa).

A chloroplast and mitochondrion-targeting transit peptide spans 1–82 (MAMASSPACH…RSSGRSTMSL (82 aa)). Disordered regions lie at residues 49 to 80 (AALD…RSTM), 141 to 160 (RFPW…SARS), and 254 to 290 (VDYD…LPTE). Residues 167 to 263 (LTLPAAELRR…VDYDEPEPTK (97 aa)) form the CRM 1 domain. A compositionally biased stretch (polar residues) spans 280 to 290 (GSSNPSLLPTE). CRM domains follow at residues 371–468 (PSLS…ELAE) and 582–682 (ETIT…SSLR). Residues 703–732 (QALSRHFAKLNRKVERLKAELVQMEDVKEQ) adopt a coiled-coil conformation. The interval 768 to 842 (VAGATADDDG…DRRNHDVNEY (75 aa)) is disordered. Positions 786–812 (DEADYPDSDDEAGDCSEDEGEDDEDEA) are enriched in acidic residues. Positions 831 to 842 (DTDRRNHDVNEY) are enriched in basic and acidic residues.

In terms of assembly, interacts with RNA. Part of large ribonucleo-protein particles that contain CAF1 and/or CAF2, and RNC1.

It is found in the plastid. The protein localises to the chloroplast stroma. The protein resides in the mitochondrion. Its function is as follows. Binds specific group II introns in chloroplasts and facilitates their splicing. Acts on subgroup IIB introns. The substrates of the subgroup IIB also require the CRM domain proteins CAF1 or CAF2, with a simultaneous binding of CFM3 and CAF1 or CAF2. May influence the biogenesis of the mitochondrial small ribosomal subunit. The chain is CRM-domain containing factor CFM3, chloroplastic/mitochondrial from Zea mays (Maize).